Here is a 262-residue protein sequence, read N- to C-terminus: MSAPCHCSAPKANIPALDDKYLSDDPAHPANLICELCRLFYDNNWVTGTGGGISIRDVKGENPNLVYIAPSGIQKERLQPWEMFVVDLNGEKLLRTPNECPQELTKSYKYKPSACTPLFMSCYTMREAGACIHTHSQSAVMCTLLWGDKVEFEISHIEQIKALPQLKLNESTSKIEKVGSMQYYDKLVIPIIENTPHEEDLTDSLQEAIRNYPGTTAVLVRRHGIYVWGEDVWKAKVYNEALDYLLELAVKMKTAGMDTVRK.

Cys115 contributes to the substrate binding site. 2 residues coordinate Zn(2+): His133 and His135. Glu158 functions as the Proton donor/acceptor in the catalytic mechanism. His223 provides a ligand contact to Zn(2+).

It belongs to the aldolase class II family. MtnB subfamily. Zn(2+) serves as cofactor.

Its subcellular location is the cytoplasm. The enzyme catalyses 5-(methylsulfanyl)-D-ribulose 1-phosphate = 5-methylsulfanyl-2,3-dioxopentyl phosphate + H2O. The protein operates within amino-acid biosynthesis; L-methionine biosynthesis via salvage pathway; L-methionine from S-methyl-5-thio-alpha-D-ribose 1-phosphate: step 2/6. Its function is as follows. Catalyzes the dehydration of methylthioribulose-1-phosphate (MTRu-1-P) into 2,3-diketo-5-methylthiopentyl-1-phosphate (DK-MTP-1-P). In Meyerozyma guilliermondii (strain ATCC 6260 / CBS 566 / DSM 6381 / JCM 1539 / NBRC 10279 / NRRL Y-324) (Yeast), this protein is Methylthioribulose-1-phosphate dehydratase.